The chain runs to 296 residues: MAHVLCNRARLVSYLPGFCSLVKRVINPRAFSTAGSSGSDESHVATAPPDICSRTVWPDETMGPFGPQDQRFQLPGNIGFDCHLNGTASQKKSQAHKTLPDVLAEPLSTERHEFVMAQYVNEFQDSDAPVEQEINSAETYFESAKVECAIQTCPELLRRDFESLFPEVANSKLMILTVTQKTENDMTVWSEEVEVEREVLLEKFISGAKEICYALRAEGYWADFIDPSSGVAFFGPYTNNTLFETDERYRHLGFSVDDLGCCKVIRHSLWGTHVVVGSIFTNATADSSIMRKLSGN.

Residues 1-38 (MAHVLCNRARLVSYLPGFCSLVKRVINPRAFSTAGSSG) constitute a mitochondrion transit peptide. Lys-203 is subject to N6-acetyllysine.

In terms of assembly, heterodimer with MMACHC. Forms a multiprotein complex with MMACHC, MTR and MTRR.

Its subcellular location is the cytoplasm. The protein localises to the mitochondrion. Involved in cobalamin metabolism and trafficking. Plays a role in regulating the biosynthesis and the proportion of two coenzymes, methylcob(III)alamin (MeCbl) and 5'-deoxyadenosylcobalamin (AdoCbl). Promotes oxidation of cob(II)alamin bound to MMACHC. The processing of cobalamin in the cytosol occurs in a multiprotein complex composed of at least MMACHC, MMADHC, MTRR (methionine synthase reductase) and MTR (methionine synthase) which may contribute to shuttle safely and efficiently cobalamin towards MTR in order to produce methionine. The protein is Cobalamin trafficking protein CblD of Mus musculus (Mouse).